A 217-amino-acid polypeptide reads, in one-letter code: N-(5'-phosphoribosyl)anthranilate isomerase (217 aa).

This sequence belongs to the TrpF family.

It catalyses the reaction N-(5-phospho-beta-D-ribosyl)anthranilate = 1-(2-carboxyphenylamino)-1-deoxy-D-ribulose 5-phosphate. Its pathway is amino-acid biosynthesis; L-tryptophan biosynthesis; L-tryptophan from chorismate: step 3/5. The protein is N-(5'-phosphoribosyl)anthranilate isomerase of Chlorobium luteolum (strain DSM 273 / BCRC 81028 / 2530) (Pelodictyon luteolum).